A 481-amino-acid polypeptide reads, in one-letter code: Aspartyl/glutamyl-tRNA(Asn/Gln) amidotransferase subunit B (481 aa).

Belongs to the GatB/GatE family. GatB subfamily. As to quaternary structure, heterotrimer of A, B and C subunits.

The enzyme catalyses L-glutamyl-tRNA(Gln) + L-glutamine + ATP + H2O = L-glutaminyl-tRNA(Gln) + L-glutamate + ADP + phosphate + H(+). It carries out the reaction L-aspartyl-tRNA(Asn) + L-glutamine + ATP + H2O = L-asparaginyl-tRNA(Asn) + L-glutamate + ADP + phosphate + 2 H(+). Functionally, allows the formation of correctly charged Asn-tRNA(Asn) or Gln-tRNA(Gln) through the transamidation of misacylated Asp-tRNA(Asn) or Glu-tRNA(Gln) in organisms which lack either or both of asparaginyl-tRNA or glutaminyl-tRNA synthetases. The reaction takes place in the presence of glutamine and ATP through an activated phospho-Asp-tRNA(Asn) or phospho-Glu-tRNA(Gln). The polypeptide is Aspartyl/glutamyl-tRNA(Asn/Gln) amidotransferase subunit B (Marinomonas sp. (strain MWYL1)).